A 442-amino-acid polypeptide reads, in one-letter code: tRNA modification GTPase MnmE (442 aa).

Arginine 27, glutamate 84, and lysine 124 together coordinate (6S)-5-formyl-5,6,7,8-tetrahydrofolate. One can recognise a TrmE-type G domain in the interval 221-366; the sequence is GFQIVILGAP…LMELISQASA (146 aa). GTP contacts are provided by residues 231-236, 250-256, 275-278, and 329-332; these read NAGKSS, TEEPGTT, DTAG, and NKAD. The Mg(2+) site is built by serine 235 and threonine 256. Lysine 442 is a (6S)-5-formyl-5,6,7,8-tetrahydrofolate binding site.

It belongs to the TRAFAC class TrmE-Era-EngA-EngB-Septin-like GTPase superfamily. TrmE GTPase family. Homodimer. Heterotetramer of two MnmE and two MnmG subunits. It depends on K(+) as a cofactor.

The protein localises to the cytoplasm. Its function is as follows. Exhibits a very high intrinsic GTPase hydrolysis rate. Involved in the addition of a carboxymethylaminomethyl (cmnm) group at the wobble position (U34) of certain tRNAs, forming tRNA-cmnm(5)s(2)U34. The chain is tRNA modification GTPase MnmE from Chelativorans sp. (strain BNC1).